A 661-amino-acid polypeptide reads, in one-letter code: Lateral signaling target protein 2 (661 aa).

Residues 294-432 (VPEDTSSTLT…SDDEITDDVQ (139 aa)) are disordered. Positions 297–310 (DTSSTLTMSDFRTN) are enriched in polar residues. 2 stretches are compositionally biased toward low complexity: residues 330-360 (SDSTSSLDSSVQDSSSETTSLASSALASPHS) and 381-393 (TNSNSSNEVTESP). Acidic residues predominate over residues 394–411 (ETIEEPDNVDMEESSESE). Positions 412–422 (VDTHIDETRNE) are enriched in basic and acidic residues. An FYVE-type zinc finger spans residues 566 to 626 (DEDCEQCTAC…VCNLCYVHRL (61 aa)). Zn(2+) contacts are provided by cysteine 572, cysteine 575, cysteine 588, cysteine 591, cysteine 596, cysteine 599, cysteine 618, and cysteine 621. The span at 641 to 650 (NGATVPSVTE) shows a compositional bias: polar residues. The interval 641 to 661 (NGATVPSVTEQQSAQTASASS) is disordered. The span at 651–661 (QQSAQTASASS) shows a compositional bias: low complexity.

This sequence belongs to the lst-2 family. As to expression, expressed in vulval precursor cells (VPCs).

Negative regulator of epidermal growth factor receptor (EGFR) signaling. This is Lateral signaling target protein 2 (lst-2) from Caenorhabditis elegans.